Reading from the N-terminus, the 306-residue chain is Probable 2-dehydro-3-deoxygalactonokinase DgoK1 (306 aa).

Belongs to the DgoK family.

It carries out the reaction 2-dehydro-3-deoxy-D-galactonate + ATP = 2-dehydro-3-deoxy-6-phospho-D-galactonate + ADP + H(+). The protein operates within carbohydrate acid metabolism; D-galactonate degradation; D-glyceraldehyde 3-phosphate and pyruvate from D-galactonate: step 2/3. Functionally, involved in the degradation of galactose via the DeLey-Doudoroff pathway. The polypeptide is Probable 2-dehydro-3-deoxygalactonokinase DgoK1 (dgoK1) (Rhizobium meliloti (strain 1021) (Ensifer meliloti)).